The primary structure comprises 551 residues: Oleuropein beta-glucosidase (551 aa).

The segment covering 1–27 (MDIQSNVLTITSGSTPTDTSSNGQAAK) has biased composition (polar residues). The segment at 1–33 (MDIQSNVLTITSGSTPTDTSSNGQAAKSTKERI) is disordered. A beta-D-glucoside contacts are provided by residues Gln52, His156, 201-202 (NE), Tyr363, Glu433, Trp482, 489-490 (EW), and Phe498. Glu202 (proton donor) is an active-site residue. Glu433 functions as the Nucleophile in the catalytic mechanism. The segment at 502–551 (YVDYANGRYTRLPKRSAVWWRNFLTKPTAVPLKNEPEKSEDRRKRLRGST) is required for the homomultimerization. Residues 532–551 (PLKNEPEKSEDRRKRLRGST) form a disordered region. Over residues 535-544 (NEPEKSEDRR) the composition is skewed to basic and acidic residues. The Nuclear localization signal signature appears at 542–550 (DRRKRLRGS).

Belongs to the glycosyl hydrolase 1 family. In terms of assembly, homomultimer. Native form of the enzyme requires at least an octamer conformation. In terms of tissue distribution, expressed in expanding leaves and in young drupes, mostly in the developing seed coat tissues, the perisperm and the mesocarp. Also detected in shoot and root meristems, flower buds, developing ovaries and tapetal cells of the anther. Not detected in embryos or endosperm, or in leaf trichomes.

The protein localises to the nucleus. The enzyme catalyses oleuropein + H2O = oleuropein aglycone + D-glucose. Functionally, major beta-glucosidase activating oleuropein into a potent protein cross-linking agent. No activity with rutin, luteolin or p-nitrophenyl-beta-glucopyranoside as substrates. The protein is Oleuropein beta-glucosidase of Olea europaea (Common olive).